The primary structure comprises 386 residues: Zinc transporter 7-A (386 aa).

At 1-37 (MLPLSIKDDEYKPPKFNLARKVSGWIRSIFSDSTSRN) the chain is on the cytoplasmic side. A helical membrane pass occupies residues 38-58 (LFCFLCLNLSFAFVELFYGIW). At 59–67 (SNSLGLISD) the chain is on the lumenal side. Residues 68–88 (SFHMFFDCTALLAGLAASVIS) form a helical membrane-spanning segment. Residues 89 to 102 (RWKTNEAFSYGYVR) lie on the Cytoplasmic side of the membrane. The helical transmembrane segment at 103–123 (AEVLAGFVNGLFLIFTAFFIF) threads the bilayer. Over 124-140 (SEGVERALDTPEVHHER) the chain is Lumenal. Residues 141–161 (LLPVSIMGLLVNIIGIFVFQH) traverse the membrane as a helical segment. The his-rich loop stretch occupies residues 161–222 (HGGGHGHSHE…GHSHDHSPKH (62 aa)). The Cytoplasmic segment spans residues 162-246 (GGGHGHSHES…KGSSKQILEG (85 aa)). A disordered region spans residues 167-239 (HSHESGHGHS…DEPPEEHKGS (73 aa)). Basic and acidic residues predominate over residues 228 to 238 (CHDEPPEEHKG). A helical transmembrane segment spans residues 247–267 (VFLHIVADTLGSVGVIFSTIL). Over 268-272 (MQRYG) the chain is Lumenal. A helical transmembrane segment spans residues 273–293 (LMIADPICSMLIALLIFVSVI). Residues 294 to 386 (PLLKQSIGIL…LYVQIDFAAI (93 aa)) lie on the Cytoplasmic side of the membrane.

This sequence belongs to the cation diffusion facilitator (CDF) transporter (TC 2.A.4) family. SLC30A subfamily. As to quaternary structure, homooligomer.

The protein localises to the golgi apparatus membrane. The protein resides in the cytoplasmic vesicle. It is found in the golgi apparatus. Its subcellular location is the trans-Golgi network. It localises to the sarcoplasmic reticulum. The protein localises to the mitochondrion. It catalyses the reaction Zn(2+)(in) = Zn(2+)(out). Functionally, zinc ion transporter mediating zinc entry from the cytosol into the lumen of organelles along the secretory pathway. By contributing to zinc ion homeostasis within the early secretory pathway, regulates the activation and folding of enzymes like alkaline phosphatases. The sequence is that of Zinc transporter 7-A (slc30a7-a) from Xenopus laevis (African clawed frog).